Reading from the N-terminus, the 848-residue chain is Translation initiation factor IF-2 (848 aa).

The segment at Arg-90–Arg-253 is disordered. Residues Glu-105–Asp-170 are compositionally biased toward low complexity. Basic residues-rich tracts occupy residues Pro-204 to Arg-215 and Lys-236 to Arg-248. Positions Lys-344–Glu-511 constitute a tr-type G domain. The interval Gly-353–Thr-360 is G1. Gly-353–Thr-360 is a GTP binding site. Positions Gly-378–His-382 are G2. The segment at Asp-399 to Gly-402 is G3. Residues Asp-399–His-403 and Asn-453–Asp-456 contribute to the GTP site. The tract at residues Asn-453–Asp-456 is G4. The interval Ser-489–His-491 is G5.

The protein belongs to the TRAFAC class translation factor GTPase superfamily. Classic translation factor GTPase family. IF-2 subfamily.

It localises to the cytoplasm. Its function is as follows. One of the essential components for the initiation of protein synthesis. Protects formylmethionyl-tRNA from spontaneous hydrolysis and promotes its binding to the 30S ribosomal subunits. Also involved in the hydrolysis of GTP during the formation of the 70S ribosomal complex. The polypeptide is Translation initiation factor IF-2 (Marinobacter nauticus (strain ATCC 700491 / DSM 11845 / VT8) (Marinobacter aquaeolei)).